Here is a 541-residue protein sequence, read N- to C-terminus: 5' exonuclease Apollo (541 aa).

A Glycyl lysine isopeptide (Lys-Gly) (interchain with G-Cter in SUMO2) cross-link involves residue Lys-334. Disordered stretches follow at residues Thr-350 to Lys-375 and Ile-450 to Leu-489. Residues Pro-358–Ser-371 are compositionally biased toward basic and acidic residues. Residues Glu-492–Phe-507 carry the TBM motif.

The protein belongs to the DNA repair metallo-beta-lactamase (DRMBL) family. In terms of assembly, interacts with TERF2; the interaction is direct. Interacts with MUS81, MRE11 and FANCD2. Interacts with HSPA2, HSPA8 and HSPA14. Interacts with SPAG5. In terms of processing, ubiquitinated, leading to its degradation. Interaction with TERF2 protects it from ubiquitination.

The protein resides in the chromosome. The protein localises to the telomere. It localises to the nucleus. Its subcellular location is the cytoplasm. It is found in the cytoskeleton. The protein resides in the microtubule organizing center. The protein localises to the centrosome. It carries out the reaction a beta-lactam + H2O = a substituted beta-amino acid. In terms of biological role, 5'-3' exonuclease that plays a central role in telomere maintenance and protection during S-phase. Participates in the protection of telomeres against non-homologous end-joining (NHEJ)-mediated repair, thereby ensuring that telomeres do not fuse. Plays a key role in telomeric loop (T loop) formation by being recruited by TERF2 at the leading end telomeres and by processing leading-end telomeres immediately after their replication via its exonuclease activity: generates 3' single-stranded overhang at the leading end telomeres avoiding blunt leading-end telomeres that are vulnerable to end-joining reactions and expose the telomere end in a manner that activates the DNA repair pathways. Together with TERF2, required to protect telomeres from replicative damage during replication by controlling the amount of DNA topoisomerase (TOP1, TOP2A and TOP2B) needed for telomere replication during fork passage and prevent aberrant telomere topology. Also involved in response to DNA damage: plays a role in response to DNA interstrand cross-links (ICLs) by facilitating double-strand break formation. In case of spindle stress, involved in prophase checkpoint. Possesses beta-lactamase activity, catalyzing the hydrolysis of penicillin G and nitrocefin. Exhibits no activity towards other beta-lactam antibiotic classes including cephalosporins (cefotaxime) and carbapenems (imipenem). This is 5' exonuclease Apollo (Dclre1b) from Rattus norvegicus (Rat).